The following is a 759-amino-acid chain: Solute carrier family 26 member 6 (759 aa).

Residues 1 to 115 (MGLADASGPR…PQGLAYALLA (115 aa)) lie on the Cytoplasmic side of the membrane. Residues 116–136 (GLPPVFGLYSSFYPVFIYFLF) traverse the membrane as a helical segment. The Extracellular portion of the chain corresponds to 137–186 (GTSRHISVGTFAVMSVMVGSVTESLAPQALNDSMINETARDAARVQVAST). 2 N-linked (GlcNAc) asparagine glycosylation sites follow: N167 and N172. The chain crosses the membrane as a helical span at residues 187-207 (LSVLVGLFQVGLGLIHFGFVV). Topologically, residues 208–263 (TYLSEPLVRGYTTAAAVQVFVSQLKYVFGLHLSSHSGPLSLIYTVLEVCWKLPQSK) are cytoplasmic. A helical transmembrane segment spans residues 264 to 284 (VGTVVTAAVAGVVLVVVKLLN). Over 285–293 (DKLQQQLPM) the chain is Extracellular. A helical transmembrane segment spans residues 294–314 (PIPGELLTLIGATGISYGMGL). The Cytoplasmic portion of the chain corresponds to 315 to 347 (KHRFEVDVVGNIPAGLVPPVAPNTQLFSKLVGS). The chain crosses the membrane as a helical span at residues 348 to 368 (AFTIAVVGFAIAISLGKIFAL). Topologically, residues 369 to 379 (RHGYRVDSNQE) are extracellular. The chain crosses the membrane as a helical span at residues 380 to 400 (LVALGLSNLIGGIFQCFPVSC). Residues 401–416 (SMSRSLVQESTGGNSQ) lie on the Cytoplasmic side of the membrane. The helical transmembrane segment at 417–437 (VAGAISSLFILLIIVKLGELF) threads the bilayer. Residues 438–484 (HDLPKAVLAAIIIVNLKGMLRQLSDMRSLWKANRADLLIWLVTFTAT) are Extracellular-facing. Residues 485 to 505 (ILLNLDLGLVVAVIFSLLLVV) traverse the membrane as a helical segment. At 506 to 759 (VRTQMPHYSV…PDSPVSVTRL (254 aa)) the chain is on the cytoplasmic side. One can recognise an STAS domain in the interval 530-742 (EYSEAKEVRG…ASVHDAVTFA (213 aa)). N553 and K582 each carry phosphoserine; by PKC. S616 is subject to Phosphoserine. The tract at residues 636-657 (GDKMEDATANGQEDSKAPDGST) is disordered. Phosphoserine is present on residues S752 and S755.

The protein belongs to the SLC26A/SulP transporter (TC 2.A.53) family. As to quaternary structure, interacts (via C-terminal domain) with PDZK1 (via C-terminal PDZ domain); the interaction induces chloride and oxalate exchange transport. Interacts with CFTR and SLC26A3. Interacts with AHCYL1; the interaction increases SLC26A6 activity. In terms of assembly, interacts with NHERF1 (via the PDZ domains) and NHERF2 (via the PDZ domains). Interacts (via C-terminal cytoplasmic domain) with CA2; the interaction stimulates chloride-bicarbonate exchange activity. Interacts with NHERF1 (via the PDZ domains) and NHERF2 (via the PDZ domains). Phosphorylated on serine residues by PKC; the phosphorylation disrupts interaction with carbonic anhydrase CA2 and reduces bicarbonate transport activity in a phorbol myristate acetate (PMA)-induced manner. Post-translationally, glycosylation at Asn-167 and Asn-172 positively regulates its chloride oxalate exchanger activity. Ubiquitous. Highest levels in kidney and pancreas. Lower expression in heart, skeletal muscle, liver and placenta. Also found in lung and brain. As to expression, ubiquitously expressed. Highest levels expressed in the kidney and pancreas. In terms of tissue distribution, expressed weakly in placenta, lung, liver and pancreas. Expressed in heart, brain, placenta, lung, liver, kidney, pancreas, spleen, thymus, prostate, testis and ovary.

It localises to the cell membrane. It is found in the apical cell membrane. The protein resides in the cytoplasmic vesicle membrane. The protein localises to the microsome. Its subcellular location is the basolateral cell membrane. It carries out the reaction 2 hydrogencarbonate(in) + chloride(out) = 2 hydrogencarbonate(out) + chloride(in). The catalysed reaction is oxalate(in) + chloride(out) = oxalate(out) + chloride(in). The enzyme catalyses oxalate(in) + formate(out) = oxalate(out) + formate(in). It catalyses the reaction oxalate(in) + sulfate(out) = oxalate(out) + sulfate(in). It carries out the reaction 2 hydrogencarbonate(out) + sulfate(in) = 2 hydrogencarbonate(in) + sulfate(out). Oxalate transport activity is inhibited by 4,4'-diisothiocyanatostilbene-2,2'-disulfonic acid (DIDS). Its activity is regulated as follows. Chloride, bicarbonate and sulfate transport activities are inhibited by 4,4'-diisothiocyanatostilbene-2,2'-disulfonic acid (DIDS). Its function is as follows. Apical membrane anion-exchanger with wide epithelial distribution that plays a role as a component of the pH buffering system for maintaining acid-base homeostasis. Acts as a versatile DIDS-sensitive inorganic and organic anion transporter that mediates the uptake of monovalent anions like chloride, bicarbonate, formate and hydroxyl ion and divalent anions like sulfate and oxalate. Functions in multiple exchange modes involving pairs of these anions, which include chloride-bicarbonate, chloride-oxalate, oxalate-formate, oxalate-sulfate and chloride-formate exchange. Apical membrane chloride-bicarbonate exchanger that mediates luminal chloride absorption and bicarbonate secretion by the small intestinal brush border membrane and contributes to intracellular pH regulation in the duodenal upper villous epithelium during proton-coupled peptide absorption, possibly by providing a bicarbonate import pathway. Also mediates intestinal chloride absorption and oxalate secretion, thereby preventing hyperoxaluria and calcium oxalate urolithiasis. Transepithelial oxalate secretion, chloride-formate, chloride-oxalate and chloride-bicarbonate transport activities in the duodenum are inhibited by PKC activation in a calcium-independent manner. The apical membrane chloride-bicarbonate exchanger also provides a major route for fluid and bicarbonate secretion into the proximal tubules of the kidney as well as into the proximal part of the interlobular pancreatic ductal tree, where it mediates electrogenic chloride-bicarbonate exchange with a chloride-bicarbonate stoichiometry of 1:2, and hence will dilute and alkalinize protein-rich acinar secretion. Also mediates the transcellular sulfate absorption and oxalate secretion across the apical membrane in the duodenum and the formate ion efflux at the apical brush border of cells in the proximal tubules of kidney. Plays a role in sperm capacitation by increasing intracellular pH. Apical membrane chloride-bicarbonate exchanger. Its association with carbonic anhydrase CA2 forms a bicarbonate transport metabolon; hence maximizes the local concentration of bicarbonate at the transporter site. In Homo sapiens (Human), this protein is Solute carrier family 26 member 6 (SLC26A6).